We begin with the raw amino-acid sequence, 232 residues long: Orotidine 5'-phosphate decarboxylase (232 aa).

Substrate-binding positions include D11, K33, 60–69, T120, R181, Q190, G210, and R211; that span reads DLKFHDIPNT. The active-site Proton donor is K62.

It belongs to the OMP decarboxylase family. Type 1 subfamily. In terms of assembly, homodimer.

It carries out the reaction orotidine 5'-phosphate + H(+) = UMP + CO2. It functions in the pathway pyrimidine metabolism; UMP biosynthesis via de novo pathway; UMP from orotate: step 2/2. In terms of biological role, catalyzes the decarboxylation of orotidine 5'-monophosphate (OMP) to uridine 5'-monophosphate (UMP). This is Orotidine 5'-phosphate decarboxylase from Vibrio vulnificus (strain YJ016).